The following is a 346-amino-acid chain: uncharacterized protein (346 aa).

This is an uncharacterized protein from Acanthamoeba polyphaga (Amoeba).